A 649-amino-acid chain; its full sequence is Threonine--tRNA ligase (649 aa).

The region spanning 1–60 (MHVVLPDGKQLELPMGATALDAASAIGPRLAQDALAATANGELVDLMTPLPDGASITLIT) is the TGS domain. The interval 248–544 (DHRKLGRELE…LIEHYAGDFP (297 aa)) is catalytic. Positions 341, 392, and 521 each coordinate Zn(2+).

The protein belongs to the class-II aminoacyl-tRNA synthetase family. Homodimer. Requires Zn(2+) as cofactor.

It localises to the cytoplasm. The enzyme catalyses tRNA(Thr) + L-threonine + ATP = L-threonyl-tRNA(Thr) + AMP + diphosphate + H(+). Its function is as follows. Catalyzes the attachment of threonine to tRNA(Thr) in a two-step reaction: L-threonine is first activated by ATP to form Thr-AMP and then transferred to the acceptor end of tRNA(Thr). Also edits incorrectly charged L-seryl-tRNA(Thr). The chain is Threonine--tRNA ligase from Deinococcus deserti (strain DSM 17065 / CIP 109153 / LMG 22923 / VCD115).